Consider the following 1008-residue polypeptide: Collagen alpha-1(I) chain (1008 aa).

The tract at residues 1 to 1008 (GGISVPGPMG…PGPPGPPGPP (1008 aa)) is disordered. Residues P18, P21, P23, P32, P35, P38, P52, P67, P73, P82, and P88 each carry the 4-hydroxyproline modification. Over residues 55–69 (NGDDGEAGKPGRPGE) the composition is skewed to basic and acidic residues. Position 91 is a 5-hydroxylysine; alternate (K91). The O-linked (Gal...) hydroxylysine; alternate glycan is linked to K91. S97 carries the phosphoserine modification. The span at 105 to 121 (DAGPAGPKGEPGSPGEN) shows a compositional bias: low complexity. Residues P115, P118, P124, P133, P139, P160, P169, P172, P199, P202, P214, P220, P229, P235, and P238 each carry the 4-hydroxyproline modification. Over residues 139 to 157 (PGASGPAGARGNDGAAGAA) the composition is skewed to low complexity. The span at 159–171 (PPGPTGPAGPPGF) shows a compositional bias: pro residues. A compositionally biased stretch (low complexity) spans 205–235 (AGAAGPAGNPGADGQPGAKGANGAPGIAGAP). Gly residues predominate over residues 236-255 (GFPGRGPSGPQGPSGPGPKG). Position 254 is a 5-hydroxylysine (K254). A 4-hydroxyproline mark is found at P260, P263, P275, P284, P299, P305, P314, and P320. The span at 309 to 318 (GERGGPGSRG) shows a compositional bias: gly residues. Position 329 is a 5-hydroxylysine (K329). A 4-hydroxyproline mark is found at P338, P347, P353, P359, P368, P371, P380, P389, P395, P407, P416, P425, P428, P446, P463, P469, P475, P481, P487, P493, P505, P514, P523, P535, P538, P544, P550, and P559. Low complexity predominate over residues 362 to 388 (KGLTGSPGSPGPDGKTGPPGPAGQDGR). The span at 397 to 416 (ARGQAGVMGFPGPKGAAGEP) shows a compositional bias: low complexity. Positions 475–484 (PGEAGKPGEQ) are enriched in low complexity. Residues 519–547 (PRGAPGNDGAKGDAGAPGAPGSQGAPGLQ) show a composition bias toward low complexity. K571 is subject to 5-hydroxylysine. 4-hydroxyproline is present on residues P577, P592, and P598. Residues 604–618 (SGPSGPAGPTGARGA) show a composition bias toward low complexity. S607 is modified (phosphoserine). A 4-hydroxyproline mark is found at P619, P625, P628, P637, P643, P661, P670, and P679. Residues 631 to 658 (AGFAGPPGADGQPGAKGEPGDAGAKGDA) show a composition bias toward low complexity. The segment covering 660-672 (PPGPAGPTGPPGP) has biased composition (pro residues). The residue at position 682 (K682) is a 5-hydroxylysine. The span at 687–703 (SAGPPGATGFPGAAGRV) shows a compositional bias: low complexity. 2 positions are modified to 4-hydroxyproline: P691 and P697. P705 carries the post-translational modification 3-hydroxyproline. Residues P706, P717, P738, P747, P755, P764, P781, P790, P793, P799, P814, P820, P826, P835, and P841 each carry the 4-hydroxyproline modification. The segment covering 731–740 (ETGPAGRPGE) has biased composition (low complexity). The segment covering 752–764 (KGSPGADGPAGAP) has biased composition (low complexity). The span at 813–823 (PPGPVGPPGLA) shows a compositional bias: pro residues. Positions 825–840 (PPGESGREGSPGAEGS) are enriched in low complexity. K850 is subject to 5-hydroxylysine. The span at 858 to 873 (PGPPGAPGAPGAPGPV) shows a compositional bias: pro residues. 3 positions are modified to 4-hydroxyproline: P861, P864, and P867. The segment covering 894–908 (AGPAGARGPAGPQGP) has biased composition (low complexity). Residues 909–923 (RGDKGETGEQGDRGI) show a composition bias toward basic and acidic residues. K912 carries the 5-hydroxylysine modification. K924 carries the post-translational modification 5-hydroxylysine; alternate. O-linked (Gal...) hydroxylysine; alternate glycosylation occurs at K924. 4 positions are modified to 4-hydroxyproline: P939, P942, P960, and P975. Low complexity predominate over residues 942 to 975 (PGEQGPSGASGPAGPRGPPGSAGSPGKDGLNGLP). The residue at position 980 (P980) is a 3-hydroxyproline. P981 carries the post-translational modification 4-hydroxyproline. Residues 993-1008 (VGPPGPPGPPGPPGPP) show a composition bias toward pro residues. 3-hydroxyproline is present on P995. Residue P996 is modified to 4-hydroxyproline. A 3-hydroxyproline modification is found at P998. A 4-hydroxyproline modification is found at P999. Position 1001 is a 3-hydroxyproline (P1001). Residues P1002, P1005, and P1008 each carry the 4-hydroxyproline modification.

This sequence belongs to the fibrillar collagen family. Trimers of one alpha 2(I) and two alpha 1(I) chains. Post-translationally, contains mostly 4-hydroxyproline. Proline residues at the third position of the tripeptide repeating unit (G-X-Y) are hydroxylated in some or all of the chains. In terms of processing, contains 3-hydroxyproline at a few sites. This modification occurs on the first proline residue in the sequence motif Gly-Pro-Hyp, where Hyp is 4-hydroxyproline. Lysine residues at the third position of the tripeptide repeating unit (G-X-Y) are 5-hydroxylated in some or all of the chains. Post-translationally, O-glycosylated on hydroxylated lysine residues. The O-linked glycan consists of a Glc-Gal disaccharide. As to expression, expressed in bones.

It localises to the secreted. Its subcellular location is the extracellular space. The protein localises to the extracellular matrix. Functionally, type I collagen is a member of group I collagen (fibrillar forming collagen). In Paramylodon harlani (Harlan's ground sloth), this protein is Collagen alpha-1(I) chain.